Consider the following 275-residue polypeptide: Methyltransferase str2 (275 aa).

It belongs to the methyltransferase superfamily. LaeA methyltransferase family.

Its pathway is mycotoxin biosynthesis. Functionally, methyltransferase; part of the gene cluster that mediates the biosynthesis of strobilurin A, an antifungal polyketide that contains a key beta-methoxyacrylate toxophore that targets the complex III of the mitochondrial electron transport chain. Strobilurin biosynthesis begins with construction of benzoyl CoA by step-wise elimination of ammonia from phenylalanine by the phenylalanine ammonia-lyase str11, oxygenation by str8 and retro-Claisen reaction to form benzoic acid, which is activated to its CoA thiolester benzoyl CoA by the dedicated CoA ligase str10. Benzoyl CoA forms the starter unit for the highly reducing polyketide synthase stpks1 that produces the polyketide prestrobilutin A. The FAD-dependent oxygenase str9 then catalyzes the key oxidative rearrangement responsible for the creation of the beta-methoxyacrylate toxophore. Str9 performs epoxidation of the 2,3 olefin of prestrobilutin A, followed by Meinwald rearrangement to furnish the aldehyde intermediate. Rapid enolization of the aldehyde intermediate would give the beta-methoxyacrylate skeleton and methylations catalyzed by str2 and str3 complete the synthesis and lead to the production of strobilurin A. The short-chain dehydrogenase stl2 and the dehydrogenase str4 play a role in the shunt pathway leading to the production of bolineol. The cluster encodes no obvious halogenase gene that could be involved in production of strobilurin B, nor any obvious dimethylallyl-transferase that could be involved in the production of strobilurin G. It is possible that unknown proteins encoded in, or near, the cluster (such as str1 or stl1) may form new classes of halogenases or dimethylally-transferases, or that the responsible genes are located elsewhere on the genome. Similarly, proteins encoded by str5/str6 hydrolases appear to have no chemical role in the biosynthesis of strobilurin A. Finally, no obvious self-resistance gene is found within the cluster. The chain is Methyltransferase str2 from Strobilurus tenacellus.